The primary structure comprises 67 residues: Large ribosomal subunit protein uL29 (67 aa).

The protein belongs to the universal ribosomal protein uL29 family.

This is Large ribosomal subunit protein uL29 from Wolbachia pipientis wMel.